The primary structure comprises 258 residues: Acyl-[acyl-carrier-protein]--UDP-N-acetylglucosamine O-acyltransferase (258 aa).

It belongs to the transferase hexapeptide repeat family. LpxA subfamily. Homotrimer.

The protein resides in the cytoplasm. The catalysed reaction is a (3R)-hydroxyacyl-[ACP] + UDP-N-acetyl-alpha-D-glucosamine = a UDP-3-O-[(3R)-3-hydroxyacyl]-N-acetyl-alpha-D-glucosamine + holo-[ACP]. The protein operates within glycolipid biosynthesis; lipid IV(A) biosynthesis; lipid IV(A) from (3R)-3-hydroxytetradecanoyl-[acyl-carrier-protein] and UDP-N-acetyl-alpha-D-glucosamine: step 1/6. Functionally, involved in the biosynthesis of lipid A, a phosphorylated glycolipid that anchors the lipopolysaccharide to the outer membrane of the cell. The sequence is that of Acyl-[acyl-carrier-protein]--UDP-N-acetylglucosamine O-acyltransferase from Pseudomonas entomophila (strain L48).